Here is a 361-residue protein sequence, read N- to C-terminus: Phospho-N-acetylmuramoyl-pentapeptide-transferase (361 aa).

Transmembrane regions (helical) follow at residues 25 to 45, 72 to 92, 95 to 115, 135 to 155, 169 to 189, 200 to 220, 240 to 260, 264 to 284, 289 to 309, and 338 to 358; these read TGGAMVTGALFVFMFGPWIID, TPTMGGLMILSGLTVGTLLWA, LNPYVWIVLAVTLGFGFVGFY, LLIEFTIAGAACFALVWLGRA, VMLNLGWAFVVFGAFVVVGAG, GLAIVPVMIAAASFGLISYLA, LAVLCGALLGAGLGFLWFNAP, IFMGDTGSLALGGMLGSIAVA, IVLAVIGGLFVLEAVSVIVQV, and QIVIRFWIIAVMLALAGLSTL.

The protein belongs to the glycosyltransferase 4 family. MraY subfamily. Mg(2+) is required as a cofactor.

Its subcellular location is the cell inner membrane. It carries out the reaction UDP-N-acetyl-alpha-D-muramoyl-L-alanyl-gamma-D-glutamyl-meso-2,6-diaminopimeloyl-D-alanyl-D-alanine + di-trans,octa-cis-undecaprenyl phosphate = di-trans,octa-cis-undecaprenyl diphospho-N-acetyl-alpha-D-muramoyl-L-alanyl-D-glutamyl-meso-2,6-diaminopimeloyl-D-alanyl-D-alanine + UMP. It participates in cell wall biogenesis; peptidoglycan biosynthesis. Its function is as follows. Catalyzes the initial step of the lipid cycle reactions in the biosynthesis of the cell wall peptidoglycan: transfers peptidoglycan precursor phospho-MurNAc-pentapeptide from UDP-MurNAc-pentapeptide onto the lipid carrier undecaprenyl phosphate, yielding undecaprenyl-pyrophosphoryl-MurNAc-pentapeptide, known as lipid I. This Rhodopseudomonas palustris (strain ATCC BAA-98 / CGA009) protein is Phospho-N-acetylmuramoyl-pentapeptide-transferase.